We begin with the raw amino-acid sequence, 509 residues long: Cytochrome P450 monooxygenase ORF9 (509 aa).

The next 2 membrane-spanning stretches (helical) occupy residues 20–40 and 309–329; these read IYVLPFVISAAALCYFIGLIV and LIIAGGETVATFLAATVYYLL. The N-linked (GlcNAc...) asparagine glycan is linked to Asn-353. Residue Cys-448 coordinates heme.

This sequence belongs to the cytochrome P450 family. Heme is required as a cofactor.

The protein resides in the membrane. It functions in the pathway sesquiterpene biosynthesis. Functionally, cytochrome P450 monooxygenase; part of the gene cluster that mediates the biosynthesis of PR-toxin, a bicyclic sesquiterpene belonging to the eremophilane class and acting as a mycotoxin. The first step of the pathway is catalyzed by the aristolochene synthase which performs the cyclization of trans,trans-farnesyl diphosphate (FPP) to the bicyclic sesquiterpene aristolochene. Following the formation of aristolochene, the non-oxygenated aristolochene is converted to the trioxygenated intermediate eremofortin B, via 7-epi-neopetasone. This conversion appears to involve three enzymes, a hydroxysterol oxidase-like enzyme, the quinone-oxidase prx3 that forms the quinone-type-structure in the bicyclic nucleus of aristolochene with the C8-oxo group and the C-3 hydroxyl group, and the P450 monooxygenase ORF6 that introduces the epoxide at the double bond between carbons 1 and 2. No monoxy or dioxy-intermediates have been reported to be released to the broth, so these three early oxidative reactions may be coupled together. Eremofortin B is further oxidized by another P450 monooxygenase, that introduces a second epoxide between carbons 7 and 11 prior to acetylation to eremofortin A by the acetyltransferase ORF8. The second epoxidation may be performed by a second P450 monooxygenase. After the acetylation step, eremofortin A is converted to eremofortin C and then to PR-toxin. First the conversion of eremofortin A to eremofortin C proceeds by oxidation of the side chain of the molecule at C-12 and is catalyzed by the short-chain oxidoreductase prx1. The cytochrome P450 monooxygenase ORF6 is probably also involved in this step. The primary alcohol formed at C-12 is finally oxidized by the short-chain alcohol dehydrogenase prx4 that forms PR-toxin. The sequence is that of Cytochrome P450 monooxygenase ORF9 from Penicillium roqueforti (strain FM164).